A 122-amino-acid polypeptide reads, in one-letter code: Large ribosomal subunit protein uL14c (122 aa).

Belongs to the universal ribosomal protein uL14 family. As to quaternary structure, part of the 50S ribosomal subunit.

The protein resides in the plastid. It localises to the chloroplast. Its function is as follows. Binds to 23S rRNA. The chain is Large ribosomal subunit protein uL14c from Chaetosphaeridium globosum (Charophycean green alga).